A 200-amino-acid chain; its full sequence is Glycerol-3-phosphate acyltransferase (200 aa).

The next 5 membrane-spanning stretches (helical) occupy residues 4-24 (FALC…AVIV), 53-73 (WAAL…VWCG), 80-100 (QFEL…PIFF), 115-135 (IAPI…LVFV), and 138-158 (GYSS…VWWF).

It belongs to the PlsY family. Probably interacts with PlsX.

It is found in the cell inner membrane. The catalysed reaction is an acyl phosphate + sn-glycerol 3-phosphate = a 1-acyl-sn-glycero-3-phosphate + phosphate. It functions in the pathway lipid metabolism; phospholipid metabolism. Its function is as follows. Catalyzes the transfer of an acyl group from acyl-phosphate (acyl-PO(4)) to glycerol-3-phosphate (G3P) to form lysophosphatidic acid (LPA). This enzyme utilizes acyl-phosphate as fatty acyl donor, but not acyl-CoA or acyl-ACP. The sequence is that of Glycerol-3-phosphate acyltransferase from Actinobacillus succinogenes (strain ATCC 55618 / DSM 22257 / CCUG 43843 / 130Z).